A 270-amino-acid polypeptide reads, in one-letter code: Formamidopyrimidine-DNA glycosylase (270 aa).

P2 serves as the catalytic Schiff-base intermediate with DNA. E3 (proton donor) is an active-site residue. Residue K59 is the Proton donor; for beta-elimination activity of the active site. Positions 91, 110, and 151 each coordinate DNA. Residues 236-270 (RVYGRDKEPCVTCGQQVKSKVLGGRNTFWCSRCQK) form an FPG-type zinc finger. Catalysis depends on R260, which acts as the Proton donor; for delta-elimination activity.

The protein belongs to the FPG family. In terms of assembly, monomer. It depends on Zn(2+) as a cofactor.

It catalyses the reaction Hydrolysis of DNA containing ring-opened 7-methylguanine residues, releasing 2,6-diamino-4-hydroxy-5-(N-methyl)formamidopyrimidine.. It carries out the reaction 2'-deoxyribonucleotide-(2'-deoxyribose 5'-phosphate)-2'-deoxyribonucleotide-DNA = a 3'-end 2'-deoxyribonucleotide-(2,3-dehydro-2,3-deoxyribose 5'-phosphate)-DNA + a 5'-end 5'-phospho-2'-deoxyribonucleoside-DNA + H(+). Functionally, involved in base excision repair of DNA damaged by oxidation or by mutagenic agents. Acts as a DNA glycosylase that recognizes and removes damaged bases. Has a preference for oxidized purines, such as 7,8-dihydro-8-oxoguanine (8-oxoG). Has AP (apurinic/apyrimidinic) lyase activity and introduces nicks in the DNA strand. Cleaves the DNA backbone by beta-delta elimination to generate a single-strand break at the site of the removed base with both 3'- and 5'-phosphates. The chain is Formamidopyrimidine-DNA glycosylase from Bdellovibrio bacteriovorus (strain ATCC 15356 / DSM 50701 / NCIMB 9529 / HD100).